A 416-amino-acid chain; its full sequence is Phosphoglycerate kinase (416 aa).

14 residues coordinate (2R)-3-phosphoglycerate: Val-23, Asp-24, Phe-25, Asn-26, Gln-38, Arg-39, Ser-62, His-63, Gly-65, Arg-66, Leu-121, Arg-122, His-168, and Arg-169. Gly-212 is an ADP binding site. Gly-212 is a CDP binding site. Positions 213 and 214 each coordinate AMP. ATP is bound at residue Ala-213. Ala-213 serves as a coordination point for Mg(2+). Mg(2+)-binding residues include Ala-216 and Asp-217. Asp-217 contacts CDP. AMP is bound at residue Lys-218. Residue Lys-218 coordinates ATP. Gly-236 serves as a coordination point for ADP. Gly-236 lines the CDP pocket. Gly-237 and Gly-311 together coordinate AMP. ATP contacts are provided by Gly-237 and Gly-311. Residues Gly-336 and Phe-341 each contribute to the CDP site. Phe-341 is a binding site for ADP. An AMP-binding site is contributed by Glu-342. 3 residues coordinate ATP: Glu-342, Asp-373, and Thr-374. Asp-373 serves as a coordination point for Mg(2+).

The protein belongs to the phosphoglycerate kinase family. As to quaternary structure, monomer. The cofactor is Mg(2+).

It localises to the cytoplasm. The protein localises to the mitochondrion. The enzyme catalyses (2R)-3-phosphoglycerate + ATP = (2R)-3-phospho-glyceroyl phosphate + ADP. It functions in the pathway carbohydrate degradation; glycolysis; pyruvate from D-glyceraldehyde 3-phosphate: step 2/5. Functionally, catalyzes one of the two ATP producing reactions in the glycolytic pathway via the reversible conversion of 1,3-diphosphoglycerate to 3-phosphoglycerate. Both L- and D- forms of purine and pyrimidine nucleotides can be used as substrates, but the activity is much lower on pyrimidines. Negatively regulates the biosynthesis of acetyl-CoA from pyruvate in the mitochondrion. The chain is Phosphoglycerate kinase (PGK1) from Candida glabrata (strain ATCC 2001 / BCRC 20586 / JCM 3761 / NBRC 0622 / NRRL Y-65 / CBS 138) (Yeast).